The sequence spans 354 residues: Ornithine carbamoyltransferase, catabolic (354 aa).

Residues 67–70 (STRT), Gln-94, Arg-118, and 145–148 (HPTQ) contribute to the carbamoyl phosphate site. L-ornithine is bound by residues Asn-177, Asp-241, and 245-246 (SM). Carbamoyl phosphate is bound by residues 284 to 285 (CL) and Arg-329.

It belongs to the aspartate/ornithine carbamoyltransferase superfamily. OTCase family.

The protein resides in the cytoplasm. It carries out the reaction carbamoyl phosphate + L-ornithine = L-citrulline + phosphate + H(+). The protein operates within amino-acid degradation; L-arginine degradation via ADI pathway; carbamoyl phosphate from L-arginine: step 2/2. Its function is as follows. Reversibly catalyzes the transfer of the carbamoyl group from carbamoyl phosphate (CP) to the N(epsilon) atom of ornithine (ORN) to produce L-citrulline. This chain is Ornithine carbamoyltransferase, catabolic (arcB), found in Lactococcus lactis subsp. lactis (strain IL1403) (Streptococcus lactis).